The primary structure comprises 546 residues: Cation/calcium exchanger 5 (546 aa).

The next 13 membrane-spanning stretches (helical) occupy residues 13–33 (ALCL…TTIP), 88–108 (NLFF…YILI), 134–154 (AVTL…VAAL), 163–183 (FGAI…FVAI), 194–214 (SFVR…YVYL), 218–238 (IFVW…GFVF), 323–343 (SANI…FVQL), 356–376 (LPLW…HFTV), 388–408 (VIVV…GELL), 423–445 (ALLG…DVAV), 455–475 (MAGC…SALV), 492–512 (VGIV…LLVI), and 522–542 (FWGI…LIIA).

This sequence belongs to the Ca(2+):cation antiporter (CaCA) (TC 2.A.19) family. Cation/calcium exchanger (CCX) subfamily.

The protein resides in the cell membrane. Membrane-localized H(+)-dependent K(+) and Na(+) transporter. This is Cation/calcium exchanger 5 (CCX5) from Arabidopsis thaliana (Mouse-ear cress).